Consider the following 255-residue polypeptide: 4-hydroxy-tetrahydrodipicolinate reductase (255 aa).

NAD(+) contacts are provided by residues 9 to 14 (GFKGKM), 89 to 91 (GTT), and 115 to 118 (APNF). Residue His-145 is the Proton donor/acceptor of the active site. His-146 serves as a coordination point for (S)-2,3,4,5-tetrahydrodipicolinate. Lys-149 functions as the Proton donor in the catalytic mechanism. 155-156 (GT) serves as a coordination point for (S)-2,3,4,5-tetrahydrodipicolinate.

The protein belongs to the DapB family.

It is found in the cytoplasm. The enzyme catalyses (S)-2,3,4,5-tetrahydrodipicolinate + NAD(+) + H2O = (2S,4S)-4-hydroxy-2,3,4,5-tetrahydrodipicolinate + NADH + H(+). It catalyses the reaction (S)-2,3,4,5-tetrahydrodipicolinate + NADP(+) + H2O = (2S,4S)-4-hydroxy-2,3,4,5-tetrahydrodipicolinate + NADPH + H(+). It participates in amino-acid biosynthesis; L-lysine biosynthesis via DAP pathway; (S)-tetrahydrodipicolinate from L-aspartate: step 4/4. Its function is as follows. Catalyzes the conversion of 4-hydroxy-tetrahydrodipicolinate (HTPA) to tetrahydrodipicolinate. In Streptococcus suis (strain 98HAH33), this protein is 4-hydroxy-tetrahydrodipicolinate reductase.